A 271-amino-acid polypeptide reads, in one-letter code: Tryptophan synthase alpha chain (271 aa).

Catalysis depends on proton acceptor residues E49 and D60.

Belongs to the TrpA family. Tetramer of two alpha and two beta chains.

It carries out the reaction (1S,2R)-1-C-(indol-3-yl)glycerol 3-phosphate + L-serine = D-glyceraldehyde 3-phosphate + L-tryptophan + H2O. It functions in the pathway amino-acid biosynthesis; L-tryptophan biosynthesis; L-tryptophan from chorismate: step 5/5. In terms of biological role, the alpha subunit is responsible for the aldol cleavage of indoleglycerol phosphate to indole and glyceraldehyde 3-phosphate. The protein is Tryptophan synthase alpha chain of Blochmanniella floridana.